The chain runs to 323 residues: Ankyrin repeat and SOCS box protein 11 (323 aa).

7 ANK repeats span residues 64 to 93, 97 to 126, 130 to 159, 162 to 191, 195 to 224, 227 to 256, and 260 to 289; these read ADRS…NVNL, NRVS…HVNA, HGAT…KAQL, YLAS…NIEQ, QLGT…SVDH, WLDT…NLNL, and QGKS…ALSQ. An SOCS box domain is found at 273 to 323; the sequence is SVRQALLLHEGPPALSQLCRLCVRKCLGRTCHHAIYALGLPESLEKFLLYQ.

Belongs to the ankyrin SOCS box (ASB) family. As to quaternary structure, substrate-recognition component of the ECS(ASB11) complex, composed of ASB11, CUL5, ELOB, ELOC and RNF7/RBX2.

It is found in the endoplasmic reticulum. It functions in the pathway protein modification; protein ubiquitination. In terms of biological role, substrate-recognition component of a cullin-5-RING E3 ubiquitin-protein ligase complex (ECS complex, also named CRL5 complex), which mediates the ubiquitination and subsequent proteasomal degradation of target proteins, such as BIK, DIRAS2 and RPN1. The ECS(ASB11) complex acts as a regulator of the endoplasmic reticulum unfolded protein response by mediating ubiquitination and degradation of BIK. This is Ankyrin repeat and SOCS box protein 11 (Asb11) from Mus musculus (Mouse).